A 258-amino-acid polypeptide reads, in one-letter code: F-box/SPRY domain-containing protein 1 (258 aa).

The F-box domain occupies 6-54; sequence TEYAPDIPDNVLELIFSYLKLQDLRNCSLVCKSWNRFLNDENNEVWRAQ. The region spanning 64-256 is the B30.2/SPRY domain; sequence FKTDLLSVVP…ISMVYLGPPL (193 aa).

The protein belongs to the FBXO45/Fsn family. Component of an E3 ubiquitin ligase complex composed of hiw and Fsn.

It is found in the synapse. Its pathway is protein modification; protein ubiquitination. In terms of biological role, required in the presynaptic motoneuron to down-regulate the levels of wnd and restrain synaptic terminal growth at the neuromuscular junction (NMJ). This Aedes aegypti (Yellowfever mosquito) protein is F-box/SPRY domain-containing protein 1.